A 398-amino-acid polypeptide reads, in one-letter code: Chalcone synthase 1 (398 aa).

58 to 65 (KFKRMCDK) lines the CoA pocket. C167 functions as the Acyl-thioester intermediate in the catalytic mechanism. Residues T200 and 219–220 (GD) each bind substrate. Residue A311 participates in CoA binding.

It belongs to the thiolase-like superfamily. Chalcone/stilbene synthases family. In terms of assembly, homodimer.

The catalysed reaction is (E)-4-coumaroyl-CoA + 3 malonyl-CoA + 3 H(+) = 2',4,4',6'-tetrahydroxychalcone + 3 CO2 + 4 CoA. It participates in secondary metabolite biosynthesis; flavonoid biosynthesis. In terms of biological role, the primary product of this enzyme is 4,2',4',6'-tetrahydroxychalcone (also termed naringenin-chalcone or chalcone) which can under specific conditions spontaneously isomerize into naringenin. This is Chalcone synthase 1 (CHS1) from Oryza sativa subsp. japonica (Rice).